The following is a 980-amino-acid chain: Putative helicase 087L (980 aa).

Positions 59–246 (INPHTLYDGV…IDLFNLILRT (188 aa)) constitute a Helicase ATP-binding domain. 72–79 (HEMGTGKT) is a binding site for ATP. Residues 189–192 (DEAH) carry the DEAH box motif. The Helicase C-terminal domain occupies 389 to 546 (RLSFVFSEFV…SIDLHMYEIA (158 aa)).

The protein belongs to the IIV-6 022L family. SNF2/RAD54 helicase subfamily.

This is Putative helicase 087L from Invertebrate iridescent virus 3 (IIV-3).